The sequence spans 425 residues: Histone-binding protein RBBP7 (425 aa).

WD repeat units follow at residues 47-122, 128-173, 181-217, 228-269, 275-312, 318-369, and 376-403; these read QWLP…KINH, RARY…LRLR, GLSW…KVVD, VVED…HSVD, VNCL…LHSF, EIFQ…LFIH, and ISDF…IWQM.

The protein belongs to the WD repeat RBAP46/RBAP48/MSI1 family. As to quaternary structure, binds directly to helix 1 of the histone fold of histone H4, a region that is not accessible when H4 is in chromatin.

It is found in the nucleus. Its function is as follows. Core histone-binding subunit that may target chromatin remodeling factors, histone acetyltransferases and histone deacetylases to their histone substrates in a manner that is regulated by nucleosomal DNA. Component of several complexes which regulate chromatin metabolism. This Xenopus laevis (African clawed frog) protein is Histone-binding protein RBBP7 (rbbp7).